Consider the following 247-residue polypeptide: NAD(P)H-quinone oxidoreductase subunit K (247 aa).

Residues cysteine 63, cysteine 64, cysteine 128, and cysteine 159 each contribute to the [4Fe-4S] cluster site. The segment at 218–247 is disordered; it reads TRQAPPKELTEAIGMEVPPALASQKQKEEA.

This sequence belongs to the complex I 20 kDa subunit family. In terms of assembly, NDH-1 can be composed of about 15 different subunits; different subcomplexes with different compositions have been identified which probably have different functions. [4Fe-4S] cluster serves as cofactor.

The protein localises to the cellular thylakoid membrane. The enzyme catalyses a plastoquinone + NADH + (n+1) H(+)(in) = a plastoquinol + NAD(+) + n H(+)(out). The catalysed reaction is a plastoquinone + NADPH + (n+1) H(+)(in) = a plastoquinol + NADP(+) + n H(+)(out). In terms of biological role, NDH-1 shuttles electrons from an unknown electron donor, via FMN and iron-sulfur (Fe-S) centers, to quinones in the respiratory and/or the photosynthetic chain. The immediate electron acceptor for the enzyme in this species is believed to be plastoquinone. Couples the redox reaction to proton translocation, and thus conserves the redox energy in a proton gradient. Cyanobacterial NDH-1 also plays a role in inorganic carbon-concentration. This Crocosphaera subtropica (strain ATCC 51142 / BH68) (Cyanothece sp. (strain ATCC 51142)) protein is NAD(P)H-quinone oxidoreductase subunit K.